Consider the following 457-residue polypeptide: Bifunctional protein GlmU (457 aa).

The segment at methionine 1 to arginine 230 is pyrophosphorylase. UDP-N-acetyl-alpha-D-glucosamine is bound by residues leucine 9–glycine 12, lysine 23, glutamine 73, and glycine 78–threonine 79. Aspartate 103 contributes to the Mg(2+) binding site. The UDP-N-acetyl-alpha-D-glucosamine site is built by glycine 140, glutamate 155, asparagine 170, and asparagine 228. Asparagine 228 is a binding site for Mg(2+). The segment at isoleucine 231–asparagine 251 is linker. Positions glycine 252–lysine 457 are N-acetyltransferase. 2 residues coordinate UDP-N-acetyl-alpha-D-glucosamine: arginine 333 and lysine 351. Residue histidine 363 is the Proton acceptor of the active site. Residues tyrosine 366 and asparagine 377 each coordinate UDP-N-acetyl-alpha-D-glucosamine. Acetyl-CoA contacts are provided by residues asparagine 386–tyrosine 387, alanine 423, and arginine 440.

The protein in the N-terminal section; belongs to the N-acetylglucosamine-1-phosphate uridyltransferase family. It in the C-terminal section; belongs to the transferase hexapeptide repeat family. In terms of assembly, homotrimer. It depends on Mg(2+) as a cofactor.

The protein resides in the cytoplasm. The catalysed reaction is alpha-D-glucosamine 1-phosphate + acetyl-CoA = N-acetyl-alpha-D-glucosamine 1-phosphate + CoA + H(+). The enzyme catalyses N-acetyl-alpha-D-glucosamine 1-phosphate + UTP + H(+) = UDP-N-acetyl-alpha-D-glucosamine + diphosphate. It functions in the pathway nucleotide-sugar biosynthesis; UDP-N-acetyl-alpha-D-glucosamine biosynthesis; N-acetyl-alpha-D-glucosamine 1-phosphate from alpha-D-glucosamine 6-phosphate (route II): step 2/2. The protein operates within nucleotide-sugar biosynthesis; UDP-N-acetyl-alpha-D-glucosamine biosynthesis; UDP-N-acetyl-alpha-D-glucosamine from N-acetyl-alpha-D-glucosamine 1-phosphate: step 1/1. Its pathway is bacterial outer membrane biogenesis; LPS lipid A biosynthesis. Catalyzes the last two sequential reactions in the de novo biosynthetic pathway for UDP-N-acetylglucosamine (UDP-GlcNAc). The C-terminal domain catalyzes the transfer of acetyl group from acetyl coenzyme A to glucosamine-1-phosphate (GlcN-1-P) to produce N-acetylglucosamine-1-phosphate (GlcNAc-1-P), which is converted into UDP-GlcNAc by the transfer of uridine 5-monophosphate (from uridine 5-triphosphate), a reaction catalyzed by the N-terminal domain. This chain is Bifunctional protein GlmU, found in Listeria innocua serovar 6a (strain ATCC BAA-680 / CLIP 11262).